The chain runs to 498 residues: Myocyte-specific enhancer factor 2A (498 aa).

In terms of domain architecture, MADS-box spans 3–57 (RKKIQITRIMDERNRQVTFTKRKFGLMKKAYELSVLCDCEIALIIFNSSNKLFQY). The segment at residues 58–86 (ASTDMDKVLLKYTEYNEPHESRTNSDIVE) is a DNA-binding region (mef2-type). Serine 59 is modified (phosphoserine; by CK2). Phosphoserine is present on residues serine 98 and serine 108. A Phosphothreonine modification is found at serine 108. Residues 172-220 (LADSSMLSPPPATLHRNVSPGAPQRPPSTGSASGMLSTTDLTVPNGAGN) form a disordered region. The span at 198–220 (PSTGSASGMLSTTDLTVPNGAGN) shows a compositional bias: polar residues. Phosphoserine is present on serine 233. A disordered region spans residues 240–268 (TGANSLGKVMPTKSPPPPGGGSLGMNSRK). Lysine 247 carries the N6-acetyllysine modification. Serine 253 is subject to Phosphoserine. The segment at 264-281 (MNSRKPDLRVVIPPSSKG) is required for interaction with MAPKs. Positions 287 to 294 (SEEEELEL) are beta domain. Threonine 310 and threonine 317 each carry phosphothreonine; by MAPK7. Threonine 310 is modified (phosphothreonine; by NLK). Residue serine 353 is modified to Phosphoserine; by MAPK7. The segment covering 388 to 400 (SNLSINTNQNINI) has biased composition (polar residues). The tract at residues 388–498 (SNLSINTNQN…KRMRMDTWVT (111 aa)) is disordered. At lysine 401 the chain carries N6-acetyllysine; alternate. A Glycyl lysine isopeptide (Lys-Gly) (interchain with G-Cter in SUMO); alternate cross-link involves residue lysine 401. Residue serine 406 is modified to Phosphoserine. Threonine 413 carries the phosphothreonine modification. Residues 426–436 (QQPPPQPPQPQ) are compositionally biased toward pro residues. A Phosphoserine modification is found at serine 444. Positions 444-457 (SPVDSLSSSSSSYD) are enriched in low complexity. 2 stretches are compositionally biased toward basic and acidic residues: residues 458-468 (GSDREDPRGDF) and 479-498 (NTED…TWVT).

The protein belongs to the MEF2 family. As to quaternary structure, binds DNA as a homo- or heterodimer. Dimerizes with MEF2D. Interacts with HDAC7. Interacts with PIAS1; the interaction enhances sumoylation. Interacts with HDAC4, HDAC9 and SLC2A4RG. Interacts (via the N-terminal) with MAPK7; the interaction results in the phosphorylation and transcriptional activity of MEF2A. Constitutive phosphorylation on Ser-406 promotes Lys-401 sumoylation thus preventing acetylation at this site. Dephosphorylation on Ser-406 by PPP3CA upon neuron depolarization promotes a switch from sumoylation to acetylation on residue Lys-403 leading to inhibition of dendrite claw differentiation. Phosphorylation on Thr-312 and Thr-319 are the main sites involved in p38 MAPK signaling and activate transcription. Phosphorylated on these sites by MAPK14/p38alpha and MAPK11/p38beta, but not by MAPK13/p38delta nor by MAPK12/p38gamma. Phosphorylation on Ser-408 by CDK5 induced by neurotoxicity inhibits MEF2A transcriptional activation leading to apoptosis of cortical neurons. Phosphorylation on Thr-312, Thr-319 and Ser-355 can be induced by EGF. Isoform 3 is phosphorylated on Ser-98 and Thr-108. In terms of processing, sumoylation on Lys-401 is enhanced by PIAS1 and represses transcriptional activity. Phosphorylation on Ser-406 is required for sumoylation. Has no effect on nuclear location nor on DNA binding. Sumoylated with SUMO1 and, to a lesser extent with SUMO2 and SUMO3. PIASx facilitates sumoylation in postsynaptic dendrites in the cerebellar cortex and promotes their morphogenesis. Post-translationally, acetylation on Lys-401 activates transcriptional activity. Acetylated by p300 on several sites in diffentiating myocytes. Acetylation on Lys-4 increases DNA binding and transactivation. Hyperacetylation by p300 leads to enhanced cardiac myocyte growth and heart failure. Proteolytically cleaved in cerebellar granule neurons on several sites by caspase 3 and caspase 7 following neurotoxicity. Preferentially cleaves the CDK5-mediated hyperphosphorylated form which leads to neuron apoptosis and transcriptional inactivation. As to expression, widely expressed though mainly restricted to skeletal and cardiac muscle, brain, neurons and lymphocytes. Differentially expressed depending on if isoforms contain the beta domain or not, with the total expression of the beta domain-lacking isoforms vastly exceeding that of the beta domain-containing isoforms. Isoforms containing the beta domain are expressed primarily in skeletal and cardiac muscle and in brain. Also present in lung and testis. Splicing to include the beta domain is induced in differentiating myocytes. Isoforms lacking the beta domain are expressed less abundantly in skeletal muscle, brain and lymphocytes, and are uniquely found in ovary, liver, spleen and kidney. In embryos, the beta domain-containing and beta domain-lacking isoforms are equally expressed. Also expressed cerebellar granule neurons and other regions of the CNS. Highest levels in the olfactory bulb, cortex, hippocampus, thalamus and cerebellum.

The protein resides in the nucleus. Transcriptional activator which binds specifically to the MEF2 element, 5'-YTA[AT](4)TAR-3', found in numerous muscle-specific genes. Also involved in the activation of numerous growth factor- and stress-induced genes. Mediates cellular functions not only in skeletal and cardiac muscle development, but also in neuronal differentiation and survival. Plays diverse roles in the control of cell growth, survival and apoptosis via p38 MAPK signaling in muscle-specific and/or growth factor-related transcription. In cerebellar granule neurons, phosphorylated and sumoylated MEF2A represses transcription of NUR77 promoting synaptic differentiation. Associates with chromatin to the ZNF16 promoter. The polypeptide is Myocyte-specific enhancer factor 2A (Mef2a) (Mus musculus (Mouse)).